A 226-amino-acid chain; its full sequence is 3-dehydroquinate dehydratase (226 aa).

3-dehydroquinate-binding positions include Ser9, Glu32–Arg34, and Arg59. The active-site Proton donor/acceptor is the His119. The active-site Schiff-base intermediate with substrate is the Lys146. Positions 187, 208, and 212 each coordinate 3-dehydroquinate.

The protein belongs to the type-I 3-dehydroquinase family. Homodimer.

The catalysed reaction is 3-dehydroquinate = 3-dehydroshikimate + H2O. Its pathway is metabolic intermediate biosynthesis; chorismate biosynthesis; chorismate from D-erythrose 4-phosphate and phosphoenolpyruvate: step 3/7. Involved in the third step of the chorismate pathway, which leads to the biosynthesis of aromatic amino acids. Catalyzes the cis-dehydration of 3-dehydroquinate (DHQ) and introduces the first double bond of the aromatic ring to yield 3-dehydroshikimate. This Desulfotalea psychrophila (strain LSv54 / DSM 12343) protein is 3-dehydroquinate dehydratase.